The primary structure comprises 29 residues: NAD-reducing hydrogenase HoxS subunit delta (29 aa).

The span at 1–11 shows a compositional bias: basic and acidic residues; sequence MKHSEKNEIAS. Residues 1-29 form a disordered region; sequence MKHSEKNEIASHELPTTPLDPVLAAGRES.

Belongs to the [NiFe]/[NiFeSe] hydrogenase small subunit family. As to quaternary structure, tetramer of an alpha and a gamma subunits (flavin-containing dimer), and a delta and a nickel-containing beta subunits (hydrogenase dimer). The cofactor is [4Fe-4S] cluster. [3Fe-4S] cluster serves as cofactor. It depends on [2Fe-2S] cluster as a cofactor. FMN is required as a cofactor. Requires Ni(2+) as cofactor.

It is found in the cytoplasm. It catalyses the reaction H2 + NAD(+) = NADH + H(+). This is NAD-reducing hydrogenase HoxS subunit delta (hoxY) from Rhodococcus opacus (Nocardia opaca).